The chain runs to 512 residues: Protein arginine N-methyltransferase 2 (512 aa).

Residues 67–103 (TSNIDDLPLPPPIQEVEEEEPTQQNIEQQQQTQDESD) form a disordered region. The segment covering 88-99 (TQQNIEQQQQTQ) has biased composition (low complexity). Residues 120–508 (DEEYFSSYSK…KTNPFDYSYQ (389 aa)) form the SAM-dependent MTase PRMT-type domain. Residues histidine 133, arginine 142, glycine 166, and glutamate 217 each contribute to the S-adenosyl-L-methionine site. Active-site residues include glutamate 231 and glutamate 240. The tract at residues 375–395 (DDDDNDNNNNNNDNSNDDENK) is disordered.

It belongs to the class I-like SAM-binding methyltransferase superfamily. Protein arginine N-methyltransferase family.

The protein localises to the cytoplasm. It localises to the nucleus. The enzyme catalyses L-arginyl-[protein] + 2 S-adenosyl-L-methionine = N(omega),N(omega)-dimethyl-L-arginyl-[protein] + 2 S-adenosyl-L-homocysteine + 2 H(+). Its function is as follows. Arginine methyltransferase that methylates the guanidino nitrogens of arginyl residues in some proteins such as histones. The protein is Protein arginine N-methyltransferase 2 (prmt2) of Dictyostelium discoideum (Social amoeba).